The chain runs to 319 residues: Taste receptor type 2 member 30 (319 aa).

Position 1 (M1) is a topological domain, extracellular. A helical transmembrane segment spans residues 2-22 (ITFLPIIFSILIVVIFVIGNF). Residues 23–46 (ANGFIALVNSIEWVKRQKISFVDQ) are Cytoplasmic-facing. Residues 47–67 (ILTALAVSRVGLLWVLLLHWY) form a helical membrane-spanning segment. Residues 68 to 86 (ATQLNPAFYSVEVRITAYN) are Extracellular-facing. The helical transmembrane segment at 87–107 (VWAVTNHFSSWLATSLSMFYL) threads the bilayer. At 108–126 (LRIANFSNLIFLRIKRRVK) the chain is on the cytoplasmic side. A helical transmembrane segment spans residues 127-147 (SVVLVILLGPLLFLVCHLFVI). Over 148 to 178 (NMDETVWTKEYEGNVTWKIKLRSAMYHSNMT) the chain is Extracellular. Residues N161 and N176 are each glycosylated (N-linked (GlcNAc...) asparagine). The chain crosses the membrane as a helical span at residues 179–199 (LTMLANFVPLTLTLISFLLLI). Over 200–229 (CSLCKHLKKMQLHGKGSQDPSTKVHIKALQ) the chain is Cytoplasmic. Residues 230-250 (TVTSFLLLCAIYFLSMIISVC) form a helical membrane-spanning segment. Residues 251–259 (NFGRLEKQP) lie on the Extracellular side of the membrane. The helical transmembrane segment at 260–280 (VFMFCQAIIFSYPSTHPFILI) threads the bilayer. Over 281-319 (LGNKKLKQIFLSVLRHVRYWVKDRSLRLHRFTRGALCVF) the chain is Cytoplasmic.

It belongs to the G-protein coupled receptor T2R family. Expressed in subsets of taste receptor cells of the tongue and exclusively in gustducin-positive cells.

The protein localises to the membrane. Its function is as follows. Receptor that may play a role in the perception of bitterness and is gustducin-linked. May play a role in sensing the chemical composition of the gastrointestinal content. The activity of this receptor may stimulate alpha gustducin, mediate PLC-beta-2 activation and lead to the gating of TRPM5. The chain is Taste receptor type 2 member 30 (TAS2R30) from Homo sapiens (Human).